We begin with the raw amino-acid sequence, 455 residues long: Cysteine--tRNA ligase (455 aa).

C28 lines the Zn(2+) pocket. Residues 30 to 40 carry the 'HIGH' region motif; it reads MTVYDYCHLGH. 3 residues coordinate Zn(2+): C209, H234, and E238. Residues 266–270 carry the 'KMSKS' region motif; the sequence is KMSKS. ATP is bound at residue K269.

The protein belongs to the class-I aminoacyl-tRNA synthetase family. As to quaternary structure, monomer. Zn(2+) serves as cofactor.

It is found in the cytoplasm. It carries out the reaction tRNA(Cys) + L-cysteine + ATP = L-cysteinyl-tRNA(Cys) + AMP + diphosphate. The chain is Cysteine--tRNA ligase from Methylobacillus flagellatus (strain ATCC 51484 / DSM 6875 / VKM B-1610 / KT).